A 106-amino-acid chain; its full sequence is MPFLDIQKRFGLNIDRWLTTQSAEQPYKMASRCHAFEKEWIECAHGIGYTRAEKECKIEYDDFIECLLRQKTMRRTGTIRKQRDKLIKEGKYTPPPHHIGKGEPRP.

Positions 30-74 (ASRCHAFEKEWIECAHGIGYTRAEKECKIEYDDFIECLLRQKTMR) constitute a CHCH domain. 2 short sequence motifs (cx9C motif) span residues 33 to 43 (CHAFEKEWIEC) and 56 to 66 (CKIEYDDFIEC). 2 disulfides stabilise this stretch: cysteine 33/cysteine 66 and cysteine 43/cysteine 56. Residues 78–106 (TIRKQRDKLIKEGKYTPPPHHIGKGEPRP) form a disordered region.

Belongs to the complex I NDUFS5 subunit family. In terms of assembly, mammalian complex I is composed of 45 different subunits. This is a component of the iron-sulfur (IP) fragment of the enzyme.

Its subcellular location is the mitochondrion inner membrane. The protein localises to the mitochondrion intermembrane space. In terms of biological role, accessory subunit of the mitochondrial membrane respiratory chain NADH dehydrogenase (Complex I), that is believed not to be involved in catalysis. Complex I functions in the transfer of electrons from NADH to the respiratory chain. The immediate electron acceptor for the enzyme is believed to be ubiquinone. In Pongo abelii (Sumatran orangutan), this protein is NADH dehydrogenase [ubiquinone] iron-sulfur protein 5 (NDUFS5).